Consider the following 150-residue polypeptide: MRVWIDADACPKAAKDLIVKFALKRKFEVVMVAGQAVAKPAFAIVRLIVVPSGMDAADDYIVEHAVPGELVICSDVPLADRLVKKGVAALDPRGREFDERNMGDRLAARNLFTELREQGQVGGGQAAYGEREKQAFANALDRIIARLSKG.

Belongs to the UPF0178 family.

This Pseudomonas putida (strain ATCC 47054 / DSM 6125 / CFBP 8728 / NCIMB 11950 / KT2440) protein is UPF0178 protein PP_5221.